The sequence spans 264 residues: Thymidylate synthase (264 aa).

Arg21 provides a ligand contact to dUMP. His51 contributes to the (6R)-5,10-methylene-5,6,7,8-tetrahydrofolate binding site. 126 to 127 (RR) is a binding site for dUMP. The Nucleophile role is filled by Cys146. Residues 166 to 169 (RSCD), Asn177, and 207 to 209 (HLY) contribute to the dUMP site. A (6R)-5,10-methylene-5,6,7,8-tetrahydrofolate-binding site is contributed by Asp169. Residue Ala263 participates in (6R)-5,10-methylene-5,6,7,8-tetrahydrofolate binding.

It belongs to the thymidylate synthase family. Bacterial-type ThyA subfamily. Homodimer.

It is found in the cytoplasm. The enzyme catalyses dUMP + (6R)-5,10-methylene-5,6,7,8-tetrahydrofolate = 7,8-dihydrofolate + dTMP. Its pathway is pyrimidine metabolism; dTTP biosynthesis. Its function is as follows. Catalyzes the reductive methylation of 2'-deoxyuridine-5'-monophosphate (dUMP) to 2'-deoxythymidine-5'-monophosphate (dTMP) while utilizing 5,10-methylenetetrahydrofolate (mTHF) as the methyl donor and reductant in the reaction, yielding dihydrofolate (DHF) as a by-product. This enzymatic reaction provides an intracellular de novo source of dTMP, an essential precursor for DNA biosynthesis. In Pectobacterium carotovorum subsp. carotovorum (strain PC1), this protein is Thymidylate synthase.